Consider the following 454-residue polypeptide: Death-associated protein kinase 3 (454 aa).

In terms of domain architecture, Protein kinase spans 13–275 (YEMGEELGSG…IAQSLEHSWI (263 aa)). ATP is bound by residues 19-27 (LGSGQFAIV) and K42. Residue S50 is modified to Phosphoserine; by autocatalysis. 2 residues coordinate pyridone 6: E94 and V96. Catalysis depends on D139, which acts as the Proton acceptor. Residues 161–204 (DFGIAHKIEAGNEFKNIFGTPEFVAPEIVNYEPLGLEADMWSIG) are activation segment. 2 positions are modified to phosphothreonine: T180 and T225. T265 is subject to Phosphothreonine; by autocatalysis and ROCK1. The residue at position 299 (T299) is a Phosphothreonine; by autocatalysis, DAPK1 and ROCK1. Phosphothreonine; by autocatalysis is present on T306. S309 is modified (phosphoserine; by DAPK1). Residue S311 is modified to Phosphoserine; by autocatalysis and DAPK1. Phosphoserine; by DAPK1 is present on residues S312, S318, and S326. A leucine-zipper region spans residues 427–441 (VASEMRFVQDLVRAL).

The protein belongs to the protein kinase superfamily. CAMK Ser/Thr protein kinase family. DAP kinase subfamily. As to quaternary structure, homooligomer in its kinase-active form (homotrimers and homodimers are reported); monomeric in its kinase-inactive form. Homodimerization is required for activation segment autophosphorylation. Isoform 1 and isoform 2 interact with myosin and PPP1R12A; interaction of isoform 1 with PPP1R12A is inhibited by RhoA dominant negative form. Interacts with NLK, DAXX, STAT3, RHOD (GTP-bound form) and TCP10L. Interacts with PAWR; the interaction is reported conflictingly: according to PubMed:17953487 does not interact with PAWR. Interacts with ULK1; may be a substrate of ULK1. Interacts with LUZP1; the interaction is likely to occur throughout the cell cycle and reduces the LUZP1-mediated suppression of MYL9 phosphorylation. Mg(2+) is required as a cofactor. The phosphorylation status is critical for kinase activity, oligomerization and intracellular localization. Phosphorylation at Thr-180, Thr-225 and Thr-265 is essential for activity. The phosphorylated form is localized in the cytoplasm promoted by phosphorylation at Thr-299; nuclear translocation or retention is maximal when it is not phosphorylated. Phosphorylation increases the trimeric form, and its dephosphorylation favors a kinase-inactive monomeric form. Both isoform 1 and isoform 2 can undergo autophosphorylation. Widely expressed. Isoform 1 and isoform 2 are expressed in the bladder smooth muscle.

The protein resides in the nucleus. The protein localises to the PML body. It localises to the cytoplasm. It is found in the cytoskeleton. Its subcellular location is the microtubule organizing center. The protein resides in the centrosome. The protein localises to the chromosome. It localises to the centromere. It is found in the spindle. Its subcellular location is the midbody. The catalysed reaction is L-seryl-[protein] + ATP = O-phospho-L-seryl-[protein] + ADP + H(+). It carries out the reaction L-threonyl-[protein] + ATP = O-phospho-L-threonyl-[protein] + ADP + H(+). A sequential activation is proposed: autophosphorylation at consensus sites is leading to dimerization of the catalytic domain stabilized by phosphorylation at Ser-50 and activation segment exchange (producing an active confirmation of both kinase modules in trans) followed by phosphorylation at Thr-180 in the activation segment and at other regulatory sites. Phosphorylation at Thr-180, Thr-225 and Thr-265 is essential for activity. Oligomerization is required for full enzymatic activity. Inhibited by pyridone-6 (K00225), a potent, ATP-competitive inhibitor. Functionally, serine/threonine kinase which is involved in the regulation of apoptosis, autophagy, transcription, translation and actin cytoskeleton reorganization. Involved in the regulation of smooth muscle contraction. Regulates both type I (caspase-dependent) apoptotic and type II (caspase-independent) autophagic cell deaths signal, depending on the cellular setting. Involved in regulation of starvation-induced autophagy. Regulates myosin phosphorylation in both smooth muscle and non-muscle cells. In smooth muscle, regulates myosin either directly by phosphorylating MYL12B and MYL9 or through inhibition of smooth muscle myosin phosphatase (SMPP1M) via phosphorylation of PPP1R12A; the inhibition of SMPP1M functions to enhance muscle responsiveness to Ca(2+) and promote a contractile state. Phosphorylates MYL12B in non-muscle cells leading to reorganization of actin cytoskeleton. Isoform 2 can phosphorylate myosin, PPP1R12A and MYL12B. Overexpression leads to condensation of actin stress fibers into thick bundles. Involved in actin filament focal adhesion dynamics. The function in both reorganization of actin cytoskeleton and focal adhesion dissolution is modulated by RhoD. Positively regulates canonical Wnt/beta-catenin signaling through interaction with NLK and TCF7L2. Phosphorylates RPL13A on 'Ser-77' upon interferon-gamma activation which is causing RPL13A release from the ribosome, RPL13A association with the GAIT complex and its subsequent involvement in transcript-selective translation inhibition. Enhances transcription from AR-responsive promoters in a hormone- and kinase-dependent manner. Involved in regulation of cell cycle progression and cell proliferation. May be a tumor suppressor. The protein is Death-associated protein kinase 3 (DAPK3) of Homo sapiens (Human).